The chain runs to 380 residues: MSKKHTTLNASIIDTRRPTVAGADRHPGWHALRKIAARITTPLLPDDYLHLANPLWSARELRGRILGVRRETEDSATLFIKPGWGFSFDYQPGQYIGIGLLVDGRWRWRSYSLTSSPAASGSARMVTVTVKAMPEGFLSTHLVAGVKPGTIVRLAAPQGNFVLPDPAPPLILFLTAGSGITPVMSMLRTLVRRNQITDVVHLHSAPTAADVMFGAELAALAADHPGYRLSVRETRAQGRLDLTRIGQQVPDWRERQTWACGPEGVLNQADKVWSSAGASDRLHLERFAVSKTAPAGAGGTVTFARSGKSVAADAATSLMDAGEGAGVQLPFGCRMGICQSCVVDLVEGHVRDLRTGQRHEPGTRVQTCVSAASGDCVLDI.

Residues 58–164 (ARELRGRILG…AAPQGNFVLP (107 aa)) enclose the FAD-binding FR-type domain. A 2Fe-2S ferredoxin-type domain is found at 299-380 (GTVTFARSGK…AASGDCVLDI (82 aa)). Residues cysteine 333, cysteine 338, cysteine 341, and cysteine 368 each coordinate [2Fe-2S] cluster.

As to quaternary structure, interacts with DesA3 to form a functional acyl-CoA desaturase complex. [2Fe-2S] cluster is required as a cofactor. FAD serves as cofactor.

Its subcellular location is the cell membrane. Its pathway is lipid metabolism; fatty acid metabolism. Functionally, is likely involved in the aerobic desaturation system responsible for the synthesis of oleic acid from stearoyl-CoA; oleic acid is a precursor of mycobacterial membrane phospholipids and triglycerides. Is the electron transfer partner for the stearoyl-CoA 9-desaturase DesA3. Catalyzes electron transfer reaction between NADPH and the diiron center of DesA3. Cannot use NADH. The polypeptide is NADPH oxidoreductase (Mycobacterium tuberculosis (strain ATCC 25618 / H37Rv)).